A 433-amino-acid chain; its full sequence is Serine--tRNA ligase (433 aa).

235–237 lines the L-serine pocket; that stretch reads TSE. Residue 266–268 participates in ATP binding; sequence RSE. An L-serine-binding site is contributed by Glu-289. 353–356 provides a ligand contact to ATP; that stretch reads EISS. An L-serine-binding site is contributed by Ser-388.

This sequence belongs to the class-II aminoacyl-tRNA synthetase family. Type-1 seryl-tRNA synthetase subfamily. Homodimer. The tRNA molecule binds across the dimer.

The protein localises to the cytoplasm. It carries out the reaction tRNA(Ser) + L-serine + ATP = L-seryl-tRNA(Ser) + AMP + diphosphate + H(+). The catalysed reaction is tRNA(Sec) + L-serine + ATP = L-seryl-tRNA(Sec) + AMP + diphosphate + H(+). The protein operates within aminoacyl-tRNA biosynthesis; selenocysteinyl-tRNA(Sec) biosynthesis; L-seryl-tRNA(Sec) from L-serine and tRNA(Sec): step 1/1. Its function is as follows. Catalyzes the attachment of serine to tRNA(Ser). Is also able to aminoacylate tRNA(Sec) with serine, to form the misacylated tRNA L-seryl-tRNA(Sec), which will be further converted into selenocysteinyl-tRNA(Sec). In Burkholderia cenocepacia (strain ATCC BAA-245 / DSM 16553 / LMG 16656 / NCTC 13227 / J2315 / CF5610) (Burkholderia cepacia (strain J2315)), this protein is Serine--tRNA ligase.